A 430-amino-acid polypeptide reads, in one-letter code: Serine--tRNA ligase (430 aa).

Residue 231–233 (TSE) coordinates L-serine. 262–264 (RSE) is an ATP binding site. Glu285 is a binding site for L-serine. ATP is bound at residue 349–352 (EISS). Ser385 contacts L-serine.

Belongs to the class-II aminoacyl-tRNA synthetase family. Type-1 seryl-tRNA synthetase subfamily. In terms of assembly, homodimer. The tRNA molecule binds across the dimer.

Its subcellular location is the cytoplasm. The enzyme catalyses tRNA(Ser) + L-serine + ATP = L-seryl-tRNA(Ser) + AMP + diphosphate + H(+). It carries out the reaction tRNA(Sec) + L-serine + ATP = L-seryl-tRNA(Sec) + AMP + diphosphate + H(+). It participates in aminoacyl-tRNA biosynthesis; selenocysteinyl-tRNA(Sec) biosynthesis; L-seryl-tRNA(Sec) from L-serine and tRNA(Sec): step 1/1. In terms of biological role, catalyzes the attachment of serine to tRNA(Ser). Is also able to aminoacylate tRNA(Sec) with serine, to form the misacylated tRNA L-seryl-tRNA(Sec), which will be further converted into selenocysteinyl-tRNA(Sec). This is Serine--tRNA ligase from Ruegeria pomeroyi (strain ATCC 700808 / DSM 15171 / DSS-3) (Silicibacter pomeroyi).